A 519-amino-acid polypeptide reads, in one-letter code: Ent-kaurene oxidase (519 aa).

At 1–10 the chain is on the chloroplast intermembrane side; the sequence is MDTLLSLQAV. A helical transmembrane segment spans residues 11-31; sequence PAAAAIGGPVVAIGGITLFFI. The Cytoplasmic portion of the chain corresponds to 32–519; sequence REYVKDQRKK…PRLRDRVCVS (488 aa). Residue Cys458 coordinates heme.

Belongs to the cytochrome P450 family. Heme is required as a cofactor.

It is found in the plastid. The protein localises to the chloroplast outer membrane. It carries out the reaction ent-kaur-16-ene + 3 reduced [NADPH--hemoprotein reductase] + 3 O2 = ent-kaur-16-en-19-oate + 3 oxidized [NADPH--hemoprotein reductase] + 4 H2O + 4 H(+). The protein operates within plant hormone biosynthesis; gibberellin biosynthesis. Functionally, catalyzes three successive oxidations of the 4-methyl group of ent-kaurene giving kaurenoic acid, a key step in gibberellins (GAs) biosynthesis. GAs, which are involved many processes, including stem elongation, play a central role in plant development. The protein is Ent-kaurene oxidase of Salvia miltiorrhiza (Chinese sage).